A 1030-amino-acid polypeptide reads, in one-letter code: Probable serine/threonine-protein kinase SIS8 (1030 aa).

2 stretches are compositionally biased toward polar residues: residues 44 to 58 and 399 to 419; these read PNQS…STTK and YSAS…NGIE. Disordered stretches follow at residues 44–84, 399–474, 555–625, and 689–736; these read PNQS…PEIK, YSAS…KAPF, TVES…ASST, and LGSN…SDCD. 3 stretches are compositionally biased toward basic and acidic residues: residues 426-435, 458-471, and 560-580; these read TEFRTGEHRS, ISRE…KVEK, and NSTE…EGRH. Over residues 613–625 the composition is skewed to low complexity; that stretch reads SQSDSSHSEASST. Residues 748-1003 form the Protein kinase domain; sequence ITVGERIGLG…AEIMASLKRL (256 aa). Residues 754-762 and Lys-775 contribute to the ATP site; that span reads IGLGSYGEV. Catalysis depends on Asp-871, which acts as the Proton acceptor. The segment covering 1007-1023 has biased composition (polar residues); it reads VTGSNIPRPVPSSSSLP. Positions 1007–1030 are disordered; it reads VTGSNIPRPVPSSSSLPTEHEQKD.

The protein belongs to the protein kinase superfamily. Ser/Thr protein kinase family. As to quaternary structure, interacts with UGT72E1. Expressed roots, rosette and cauline leaves, and at lower levels in flowers and siliques.

It is found in the nucleus. The catalysed reaction is L-seryl-[protein] + ATP = O-phospho-L-seryl-[protein] + ADP + H(+). It catalyses the reaction L-threonyl-[protein] + ATP = O-phospho-L-threonyl-[protein] + ADP + H(+). In terms of biological role, acts as a negative regulator of salt tolerance. Mediates sugar response during early seedling development. The protein is Probable serine/threonine-protein kinase SIS8 of Arabidopsis thaliana (Mouse-ear cress).